A 3392-amino-acid chain; its full sequence is Genome polyprotein (3392 aa).

The interaction with host EXOC1 stretch occupies residues methionine 1–methionine 15. Topologically, residues methionine 1 to serine 101 are cytoplasmic. The hydrophobic; homodimerization of capsid protein C stretch occupies residues leucine 37–phenylalanine 72. Positions serine 101–alanine 114 are cleaved as a propeptide — ER anchor for the capsid protein C, removed in mature form by serine protease NS3. A helical membrane pass occupies residues valine 102–threonine 119. The Extracellular segment spans residues arginine 120–leucine 242. An N-linked (GlcNAc...) asparagine; by host glycan is attached at asparagine 183. A helical membrane pass occupies residues arginine 243–threonine 260. Position 261 (serine 261) is a topological domain, cytoplasmic. Residues isoleucine 262 to alanine 280 form a helical membrane-spanning segment. Residues methionine 281–glycine 725 lie on the Extracellular side of the membrane. Intrachain disulfides connect cysteine 283-cysteine 310, cysteine 340-cysteine 401, cysteine 354-cysteine 385, and cysteine 372-cysteine 396. Asparagine 347 carries an N-linked (GlcNAc...) asparagine; by host glycan. The tract at residues aspartate 378 to glycine 391 is fusion peptide. Asparagine 433 carries N-linked (GlcNAc...) asparagine; by host glycosylation. Disulfide bonds link cysteine 465–cysteine 565 and cysteine 582–cysteine 613. A helical membrane pass occupies residues valine 726 to leucine 746. The Cytoplasmic portion of the chain corresponds to glycine 747 to serine 752. The chain crosses the membrane as a helical span at residues threonine 753–valine 773. The Extracellular portion of the chain corresponds to glutamine 774–methionine 1195. Intrachain disulfides connect cysteine 779-cysteine 790, cysteine 830-cysteine 918, cysteine 954-cysteine 998, cysteine 1055-cysteine 1104, cysteine 1066-cysteine 1088, and cysteine 1087-cysteine 1091. N-linked (GlcNAc...) asparagine; by host glycans are attached at residues asparagine 905 and asparagine 982. Asparagine 1190 carries an N-linked (GlcNAc...) asparagine; by host glycan. The chain crosses the membrane as a helical span at residues glycine 1196–phenylalanine 1220. At arginine 1221 to arginine 1226 the chain is on the cytoplasmic side. Residues glutamate 1227–asparagine 1245 form a helical membrane-spanning segment. Residues serine 1246–serine 1269 lie on the Lumenal side of the membrane. Residues histidine 1270–tyrosine 1290 traverse the membrane as a helical segment. Residue alanine 1291 is a topological domain, cytoplasmic. The helical transmembrane segment at tryptophan 1292–serine 1310 threads the bilayer. Topologically, residues threonine 1311–lysine 1315 are lumenal. Residues threonine 1316 to isoleucine 1336 form a helical membrane-spanning segment. Residues threonine 1337–glutamate 1351 are Cytoplasmic-facing. The chain crosses the membrane as a helical span at residues glycine 1352 to aspartate 1370. A topological domain (lumenal) is located at residue valine 1371. Residues proline 1372 to glycine 1391 traverse the membrane as a helical segment. At serine 1392–threonine 1447 the chain is on the cytoplasmic side. Residues leucine 1398 to aspartate 1437 form an interacts with and activates NS3 protease region. The helical intramembrane region spans leucine 1448–phenylalanine 1468. The Cytoplasmic segment spans residues tryptophan 1469 to threonine 2148. A Peptidase S7 domain is found at serine 1476–glutamate 1653. Residues histidine 1526, aspartate 1550, and serine 1610 each act as charge relay system; for serine protease NS3 activity in the active site. The 157-residue stretch at aspartate 1656–glutamate 1812 folds into the Helicase ATP-binding domain. Residues arginine 1660–asparagine 1663 form an important for RNA-binding region. Leucine 1669–threonine 1676 is an ATP binding site. Residues aspartate 1760–histidine 1763 carry the DEAH box motif. The 167-residue stretch at serine 1822 to glutamate 1988 folds into the Helicase C-terminal domain. Position 1864 is an N6-acetyllysine; by host (lysine 1864). Residues leucine 2149–glycine 2169 traverse the membrane as a helical segment. Over arginine 2170–glycine 2171 the chain is Lumenal. The segment at residues leucine 2172 to alanine 2192 is an intramembrane region (helical). Residue serine 2193 is a topological domain, lumenal. Residues valine 2194 to isoleucine 2214 form a helical membrane-spanning segment. Over proline 2215 to alanine 2229 the chain is Cytoplasmic. The chain crosses the membrane as a helical span at residues tyrosine 2230–alanine 2244. At asparagine 2245–aspartate 2276 the chain is on the lumenal side. The segment at residues leucine 2277–methionine 2297 is an intramembrane region (helical). The Lumenal segment spans residues arginine 2298–proline 2349. Asparagine 2303 and asparagine 2307 each carry an N-linked (GlcNAc...) asparagine; by host glycan. The helical transmembrane segment at leucine 2350–leucine 2370 threads the bilayer. The Cytoplasmic portion of the chain corresponds to glutamine 2371–glutamine 2415. Residues isoleucine 2416–cysteine 2436 form a helical membrane-spanning segment. Over glutamate 2437 to threonine 2461 the chain is Lumenal. The N-linked (GlcNAc...) asparagine; by host glycan is linked to asparagine 2459. A helical membrane pass occupies residues isoleucine 2462–phenylalanine 2482. The Cytoplasmic segment spans residues serine 2483–tryptophan 3392. The mRNA cap 0-1 NS5-type MT domain occupies threonine 2495–histidine 2756. Serine 2549 provides a ligand contact to S-adenosyl-L-methionine. The residue at position 2549 (serine 2549) is a Phosphoserine. Lysine 2554 serves as the catalytic For 2'-O-MTase activity. The SUMO-interacting motif signature appears at valine 2570 to leucine 2573. Positions 2579, 2580, 2597, 2598, 2624, and 2625 each coordinate S-adenosyl-L-methionine. The active-site For 2'-O-MTase activity is the aspartate 2639. Isoleucine 2640 provides a ligand contact to S-adenosyl-L-methionine. Catalysis depends on for 2'-O-MTase activity residues lysine 2673 and glutamate 2709. Tyrosine 2711 contributes to the S-adenosyl-L-methionine binding site. 4 residues coordinate Zn(2+): glutamate 2930, histidine 2934, cysteine 2939, and cysteine 2942. The RdRp catalytic domain occupies glycine 3020–alanine 3169. Zn(2+)-binding residues include histidine 3204, cysteine 3220, and cysteine 3339.

In the N-terminal section; belongs to the class I-like SAM-binding methyltransferase superfamily. mRNA cap 0-1 NS5-type methyltransferase family. As to quaternary structure, homodimer. Interacts (via N-terminus) with host EXOC1 (via C-terminus); this interaction results in EXOC1 degradation through the proteasome degradation pathway. In terms of assembly, forms heterodimers with envelope protein E in the endoplasmic reticulum and Golgi. Homodimer; in the endoplasmic reticulum and Golgi. Interacts with protein prM. Interacts with non-structural protein 1. As to quaternary structure, homodimer; Homohexamer when secreted. Interacts with envelope protein E. In terms of assembly, interacts (via N-terminus) with serine protease NS3. Forms a heterodimer with serine protease NS3. May form homooligomers. As to quaternary structure, forms a heterodimer with NS2B. Interacts with NS4B. Interacts with unphosphorylated RNA-directed RNA polymerase NS5; this interaction stimulates RNA-directed RNA polymerase NS5 guanylyltransferase activity. Interacts with host SHFL. In terms of assembly, interacts with host MAVS; this interaction inhibits the synthesis of IFN-beta. Interacts with host SHFL. Interacts with host AUP1; the interaction occurs in the presence of Dengue virus NS4B and induces lipophagy which facilitates production of virus progeny particles. Interacts with serine protease NS3. As to quaternary structure, homodimer. Interacts with host STAT2; this interaction inhibits the phosphorylation of the latter, and, when all viral proteins are present (polyprotein), targets STAT2 for degradation. Interacts with serine protease NS3. Post-translationally, sumoylation of RNA-directed RNA polymerase NS5 increases NS5 protein stability allowing proper viral RNA replication. Specific enzymatic cleavages in vivo yield mature proteins. Cleavages in the lumen of endoplasmic reticulum are performed by host signal peptidase, whereas cleavages in the cytoplasmic side are performed by the Serine protease NS3. Signal cleavage at the 2K-4B site requires a prior NS3 protease-mediated cleavage at the 4A-2K site. In terms of processing, cleaved in post-Golgi vesicles by a host furin, releasing the mature small envelope protein M, and peptide pr. This cleavage is incomplete as up to 30% of viral particles still carry uncleaved prM. Post-translationally, N-glycosylated. The excreted form is glycosylated and this is required for efficient secretion of the protein from infected cells. Acetylated by host KAT5. Acetylation modulates NS3 RNA-binding and unwinding activities and plays an important positive role for viral replication. In terms of processing, phosphorylated on serines residues. This phosphorylation may trigger NS5 nuclear localization. Post-translationally, N-glycosylated.

It localises to the virion. The protein resides in the host nucleus. It is found in the host cytoplasm. Its subcellular location is the host perinuclear region. The protein localises to the secreted. It localises to the virion membrane. The protein resides in the host endoplasmic reticulum membrane. It is found in the host mitochondrion. It catalyses the reaction Selective hydrolysis of -Xaa-Xaa-|-Yaa- bonds in which each of the Xaa can be either Arg or Lys and Yaa can be either Ser or Ala.. The enzyme catalyses RNA(n) + a ribonucleoside 5'-triphosphate = RNA(n+1) + diphosphate. The catalysed reaction is a ribonucleoside 5'-triphosphate + H2O = a ribonucleoside 5'-diphosphate + phosphate + H(+). It carries out the reaction ATP + H2O = ADP + phosphate + H(+). It catalyses the reaction a 5'-end (5'-triphosphoguanosine)-ribonucleoside in mRNA + S-adenosyl-L-methionine = a 5'-end (N(7)-methyl 5'-triphosphoguanosine)-ribonucleoside in mRNA + S-adenosyl-L-homocysteine. The enzyme catalyses a 5'-end (N(7)-methyl 5'-triphosphoguanosine)-ribonucleoside in mRNA + S-adenosyl-L-methionine = a 5'-end (N(7)-methyl 5'-triphosphoguanosine)-(2'-O-methyl-ribonucleoside) in mRNA + S-adenosyl-L-homocysteine + H(+). Its function is as follows. Plays a role in virus budding by binding to the cell membrane and gathering the viral RNA into a nucleocapsid that forms the core of a mature virus particle. During virus entry, may induce genome penetration into the host cytoplasm after hemifusion induced by the surface proteins. Can migrate to the cell nucleus where it modulates host functions. Overcomes the anti-viral effects of host EXOC1 by sequestering and degrading the latter through the proteasome degradation pathway. Inhibits RNA silencing by interfering with host Dicer. In terms of biological role, prevents premature fusion activity of envelope proteins in trans-Golgi by binding to envelope protein E at pH6.0. After virion release in extracellular space, gets dissociated from E dimers. Functionally, acts as a chaperone for envelope protein E during intracellular virion assembly by masking and inactivating envelope protein E fusion peptide. prM is the only viral peptide matured by host furin in the trans-Golgi network probably to avoid catastrophic activation of the viral fusion activity in acidic Golgi compartment prior to virion release. prM-E cleavage is inefficient, and many virions are only partially matured. These uncleaved prM would play a role in immune evasion. Its function is as follows. May play a role in virus budding. Exerts cytotoxic effects by activating a mitochondrial apoptotic pathway through M extodomain. May display a viroporin activity. Binds to host cell surface receptor and mediates fusion between viral and cellular membranes. Envelope protein is synthesized in the endoplasmic reticulum in the form of heterodimer with protein prM. They play a role in virion budding in the ER, and the newly formed immature particle is covered with 60 spikes composed of heterodimer between precursor prM and envelope protein E. The virion is transported to the Golgi apparatus where the low pH causes dissociation of PrM-E heterodimers and formation of E homodimers. prM-E cleavage is ineficient, and many virions are only partially matured. These uncleaved prM would play a role in immune evasion. In terms of biological role, involved in immune evasion, pathogenesis and viral replication. Once cleaved off the polyprotein, is targeted to three destinations: the viral replication cycle, the plasma membrane and the extracellular compartment. Essential for viral replication. Required for formation of the replication complex and recruitment of other non-structural proteins to the ER-derived membrane structures. Excreted as a hexameric lipoparticle that plays a role against host immune response. Antagonizing the complement function. Binds to the host macrophages and dendritic cells. Inhibits signal transduction originating from Toll-like receptor 3 (TLR3). Functionally, disrupts the host endothelial glycocalyx layer of host pulmonary microvascular endothelial cells, inducing degradation of sialic acid and shedding of heparan sulfate proteoglycans. NS1 induces expression of sialidases, heparanase, and activates cathepsin L, which activates heparanase via enzymatic cleavage. These effects are probably linked to the endothelial hyperpermeability observed in severe dengue disease. Its function is as follows. Component of the viral RNA replication complex that functions in virion assembly and antagonizes the host immune response. Required cofactor for the serine protease function of NS3. May have membrane-destabilizing activity and form viroporins. In terms of biological role, displays three enzymatic activities: serine protease, NTPase and RNA helicase. NS3 serine protease, in association with NS2B, performs its autocleavage and cleaves the polyprotein at dibasic sites in the cytoplasm: C-prM, NS2A-NS2B, NS2B-NS3, NS3-NS4A, NS4A-2K and NS4B-NS5. NS3 RNA helicase binds RNA and unwinds dsRNA in the 3' to 5' direction. Functionally, regulates the ATPase activity of the NS3 helicase activity. NS4A allows NS3 helicase to conserve energy during unwinding. Plays a role in the inhibition of the host innate immune response. Interacts with host MAVS and thereby prevents the interaction between RIGI and MAVS. In turn, IFN-beta production is impaired. Interacts with host AUP1 which mediates induction of lipophagy in host cells and facilitates production of virus progeny particles. Its function is as follows. Functions as a signal peptide for NS4B and is required for the interferon antagonism activity of the latter. Induces the formation of ER-derived membrane vesicles where the viral replication takes place. Inhibits interferon (IFN)-induced host STAT1 phosphorylation and nuclear translocation, thereby preventing the establishment of a cellular antiviral state by blocking the IFN-alpha/beta pathway. In terms of biological role, replicates the viral (+) and (-) RNA genome, and performs the capping of genomes in the cytoplasm. NS5 methylates viral RNA cap at guanine N-7 and ribose 2'-O positions. Besides its role in RNA genome replication, also prevents the establishment of cellular antiviral state by blocking the interferon-alpha/beta (IFN-alpha/beta) signaling pathway. Inhibits host TYK2 and STAT2 phosphorylation, thereby preventing activation of JAK-STAT signaling pathway. This is Genome polyprotein from Aedes aegypti (Yellowfever mosquito).